The primary structure comprises 468 residues: Dimethylamine methyltransferase MtbB2 (468 aa).

Position 356 (Pyl356) is a non-standard amino acid, pyrrolysine.

This sequence belongs to the dimethylamine methyltransferase family.

The catalysed reaction is Co(I)-[dimethylamine-specific corrinoid protein] + dimethylamine + H(+) = methyl-Co(III)-[dimethylamine-specific corrinoid protein] + methylamine. It functions in the pathway one-carbon metabolism; methanogenesis from dimethylamine. In terms of biological role, catalyzes the transfer of a methyl group from dimethylamine to the corrinoid cofactor of MtbC. The polypeptide is Dimethylamine methyltransferase MtbB2 (mtbB2) (Methanosarcina acetivorans (strain ATCC 35395 / DSM 2834 / JCM 12185 / C2A)).